The primary structure comprises 280 residues: Probable holocytochrome-c-type synthase (280 aa).

The tract at residues 1–95 (MGSSQSTPKV…FALPTKREKS (95 aa)) is disordered. 2 HRM repeats span residues 35–40 (QCPLTP) and 56–61 (ACPVGA).

This sequence belongs to the cytochrome c-type heme lyase family.

The protein resides in the mitochondrion inner membrane. It carries out the reaction holo-[cytochrome c] = apo-[cytochrome c] + heme b. Probable lyase that catalyzes the covalent linking of the heme group to the cytochrome C apoprotein to produce the mature functional cytochrome. In Caenorhabditis elegans, this protein is Probable holocytochrome-c-type synthase (cchl-1).